Reading from the N-terminus, the 673-residue chain is MSEILDLSFLSEMERDLILGVLQRDEELRKADEKRIRRLKNELLEIKRKGAKRGSQHYSDRTCARCQEGLGRLIPKSSTCVGCNHLVCRECRVLESNGSWRCKVCSKEIELKKATGDWFYDQKVNRFDYRTGSEIIRMSLRQKPAVNKRETAGQSLLQQTQMGDIWPGRRIIQEQQQREQSVLFEVPKTRSGKSALEAESESLDSYTADSDSTSRRDSLDKSGLFPEWKKMSAPKSQVEKEIPPGNQNAVCGDEGDMVFKKNTKKVLRPSEYTKSVIDLRPEDVAQESGILGDRSKSVPGLSVDMEEEEEEEEDIDHLVKLHRQKLARGSMQSGSSMSTLGSIMSIYSEAGDFGNISVTGKIAFSLKFEQKTQTLVIHVKECHQLAYADEAKKRSNPYVKTYLLPDKSRQGKRKTSIKRDTINPLYDETFRYEISESLLAQRTLQFSVWHHGRFGRNTFLGEAEVHMDSWKLDKKLDHCLPLHGKISTESSPGLPAHKGELVVSLKYIPASKLPVGGDRKKSKGGEGGELQVWIKEAKNLTAAKSGGTSDSFVKGYLLPMRNKASKRKTPVMKKTLSPHYNHTFVYNGVRLEDLQHMCLELTVWDREPLASNDFLGGVRLGVGTGISNGEVVDWMDSTGEEVSLWQKMRQYPGSWAEGTLQLRSSMVKQKLGV.

Residues 4–122 form the RabBD domain; that stretch reads ILDLSFLSEM…KATGDWFYDQ (119 aa). The FYVE-type zinc finger occupies 63–105; it reads CARCQEGLGRLIPKSSTCVGCNHLVCRECRVLESNGSWRCKVC. Positions 184-253 are disordered; sequence FEVPKTRSGK…PGNQNAVCGD (70 aa). 5 positions are modified to phosphoserine: serine 202, serine 205, serine 218, serine 222, and serine 275. Residues 358-480 form the C2 1 domain; the sequence is VTGKIAFSLK…KLDKKLDHCL (123 aa). Position 490 is a phosphoserine (serine 490). The region spanning 509-635 is the C2 2 domain; the sequence is PASKLPVGGD…ISNGEVVDWM (127 aa).

In terms of assembly, part of a ternary complex containing STX1A and RAB27A. Can bind both dominant negative and dominant active mutants of RAB27A. Binds STXBP1, RAB3A, RAB8A and RAB27B. Interacts with MYO5A. In terms of tissue distribution, detected in the pancreatic islet, in particular in insulin-positive beta cells, and in pituitary.

Its subcellular location is the membrane. The protein localises to the cytoplasmic vesicle. It localises to the secretory vesicle membrane. In terms of biological role, modulates exocytosis of dense-core granules and secretion of hormones in the pancreas and the pituitary. Interacts with vesicles containing negatively charged phospholipids in a Ca(2+)-independent manner. In Mus musculus (Mouse), this protein is Synaptotagmin-like protein 4 (Sytl4).